A 261-amino-acid chain; its full sequence is Polycomb group RING finger protein 1 (261 aa).

The RING-type zinc finger occupies 45–84 (CYLCAGYFIDATTITECLHTFCKSCIVKYLQTSKYCPMCN).

In terms of assembly, component of a PRC1-like complex.

It localises to the nucleus. Its function is as follows. Component of a Polycomb group (PcG) multiprotein PRC1-like complex, a complex class required to maintain the transcriptionally repressive state of many genes, including Hox genes, throughout development. PcG PRC1 complex acts via chromatin remodeling and modification of histones; it mediates monoubiquitination of histone H2A 'Lys-119', rendering chromatin heritably changed in its expressibility. In Danio rerio (Zebrafish), this protein is Polycomb group RING finger protein 1 (pcgf1).